Here is a 401-residue protein sequence, read N- to C-terminus: MQKLTILGATGSIGASTLKVVEQNPELFSIVALAASTNVEKMVALCRKWQPKYAVMADKAAALALQSELASVSPSTEVLGGVDALCHVSALEEVDSVMAAIVGAAGLLPTMAAVKAGKRVLLANKEALVMSGQLFIDAVEEHGAELLPVDSEHNAIFQCLPQQVQTSLGRCNLEEHGISSILLTGSGGPFRYTDIAELEKVTPAQAIAHPNWSMGPKISVDSATMMNKGLEYIEAKWLFNAAREQLKVIIHPQSVIHSMVQYRDGSVLAQMGEPDMATPIALTMSYPSRVDAGVKPLDVTQVGELTFLQPDFARYPCLKLAIDACYEGQHATTALNAANEVAVDAFLNNRLGFTDIARINESVLNKITASHKSENVNSLESLIELDRMSRTIALEFLRERS.

Residues threonine 10, glycine 11, serine 12, isoleucine 13, asparagine 38, and asparagine 124 each coordinate NADPH. Residue lysine 125 coordinates 1-deoxy-D-xylulose 5-phosphate. An NADPH-binding site is contributed by glutamate 126. Aspartate 150 contacts Mn(2+). Residues serine 151, glutamate 152, serine 186, and histidine 209 each contribute to the 1-deoxy-D-xylulose 5-phosphate site. Glutamate 152 contributes to the Mn(2+) binding site. NADPH is bound at residue glycine 215. Serine 222, asparagine 227, lysine 228, and glutamate 231 together coordinate 1-deoxy-D-xylulose 5-phosphate. A Mn(2+)-binding site is contributed by glutamate 231.

This sequence belongs to the DXR family. It depends on Mg(2+) as a cofactor. The cofactor is Mn(2+).

It carries out the reaction 2-C-methyl-D-erythritol 4-phosphate + NADP(+) = 1-deoxy-D-xylulose 5-phosphate + NADPH + H(+). It functions in the pathway isoprenoid biosynthesis; isopentenyl diphosphate biosynthesis via DXP pathway; isopentenyl diphosphate from 1-deoxy-D-xylulose 5-phosphate: step 1/6. Its function is as follows. Catalyzes the NADPH-dependent rearrangement and reduction of 1-deoxy-D-xylulose-5-phosphate (DXP) to 2-C-methyl-D-erythritol 4-phosphate (MEP). The chain is 1-deoxy-D-xylulose 5-phosphate reductoisomerase from Vibrio campbellii (strain ATCC BAA-1116).